We begin with the raw amino-acid sequence, 552 residues long: 5'-AMP-activated protein kinase catalytic subunit alpha-2 (552 aa).

In terms of domain architecture, Protein kinase spans 16 to 268 (YVLGDTLGVG…IKDIREHEWF (253 aa)). Residues 22–30 (LGVGTFGKV) and Lys45 each bind ATP. Catalysis depends on Asp139, which acts as the Proton acceptor. The residue at position 172 (Thr172) is a Phosphothreonine; by LKB1 and CaMKK2. Position 258 is a phosphothreonine (Thr258). The tract at residues 291-376 (EAVKEVCEKF…PERMPPLIAD (86 aa)) is AIS. Residue Ser377 is modified to Phosphoserine. Positions 477–521 (VEQRSGSSTPQRSCSAAGLHRPRSSFDSTTAESHSLSGSLTGSLT) are disordered. A compositionally biased stretch (polar residues) spans 480–490 (RSGSSTPQRSC). Ser491 bears the Phosphoserine mark. Residues 501-510 (SFDSTTAESH) show a composition bias toward polar residues. The span at 511 to 521 (SLSGSLTGSLT) shows a compositional bias: low complexity.

Belongs to the protein kinase superfamily. CAMK Ser/Thr protein kinase family. SNF1 subfamily. In terms of assembly, AMPK is a heterotrimer of an alpha catalytic subunit (PRKAA1 or PRKAA2), a beta (PRKAB1 or PRKAB2) and a gamma non-catalytic subunits (PRKAG1, PRKAG2 or PRKAG3). Interacts with FNIP1 and FNIP2. Associates with internalized insulin receptor/INSR complexes on Golgi/endosomal membranes; PRKAA2/AMPK2 together with ATIC and HACD3/PTPLAD1 is proposed to be part of a signaling network regulating INSR autophosphorylation and endocytosis. Interacts with ARF6. The phosphorylated form at Thr-172 mediated by CamKK2 interacts with ACSS2. Requires Mg(2+) as cofactor. Post-translationally, ubiquitinated. Phosphorylated at Thr-172 by STK11/LKB1 in complex with STE20-related adapter-alpha (STRADA) pseudo kinase and CAB39. Also phosphorylated at Thr-172 by CAMKK2; triggered by a rise in intracellular calcium ions, without detectable changes in the AMP/ATP ratio. CAMKK1 can also phosphorylate Thr-172, but at much lower level. Dephosphorylated by protein phosphatase 2A and 2C (PP2A and PP2C). Phosphorylated by ULK1; leading to negatively regulate AMPK activity and suggesting the existence of a regulatory feedback loop between ULK1 and AMPK. Dephosphorylated by PPM1A and PPM1B at Thr-172 (mediated by STK11/LKB1).

The protein resides in the cytoplasm. Its subcellular location is the nucleus. The enzyme catalyses L-seryl-[protein] + ATP = O-phospho-L-seryl-[protein] + ADP + H(+). It catalyses the reaction L-threonyl-[protein] + ATP = O-phospho-L-threonyl-[protein] + ADP + H(+). The catalysed reaction is L-seryl-[acetyl-CoA carboxylase] + ATP = O-phospho-L-seryl-[acetyl-CoA carboxylase] + ADP + H(+). It carries out the reaction L-seryl-[3-hydroxy-3-methylglutaryl-coenzyme A reductase] + ATP = O-phospho-L-seryl-[3-hydroxy-3-methylglutaryl-coenzyme A reductase] + ADP + H(+). Its activity is regulated as follows. Activated by phosphorylation on Thr-172. Binding of AMP to non-catalytic gamma subunit (PRKAG1, PRKAG2 or PRKAG3) results in allosteric activation, inducing phosphorylation on Thr-172. AMP-binding to gamma subunit also sustains activity by preventing dephosphorylation of Thr-172. ADP also stimulates Thr-172 phosphorylation, without stimulating already phosphorylated AMPK. ATP promotes dephosphorylation of Thr-172, rendering the enzyme inactive. Under physiological conditions AMPK mainly exists in its inactive form in complex with ATP, which is much more abundant than AMP. AMPK is activated by antihyperglycemic drug metformin, a drug prescribed to patients with type 2 diabetes: in vivo, metformin seems to mainly inhibit liver gluconeogenesis. However, metformin can be used to activate AMPK in muscle and other cells in culture or ex vivo. Selectively inhibited by compound C (6-[4-(2-Piperidin-1-yl-ethoxy)-phenyl)]-3-pyridin-4-yl-pyyrazolo[1,5-a] pyrimidine. Activated by resveratrol, a natural polyphenol present in red wine, and S17834, a synthetic polyphenol. Salicylate/aspirin directly activates kinase activity, primarily by inhibiting Thr-172 dephosphorylation. In terms of biological role, catalytic subunit of AMP-activated protein kinase (AMPK), an energy sensor protein kinase that plays a key role in regulating cellular energy metabolism. In response to reduction of intracellular ATP levels, AMPK activates energy-producing pathways and inhibits energy-consuming processes: inhibits protein, carbohydrate and lipid biosynthesis, as well as cell growth and proliferation. AMPK acts via direct phosphorylation of metabolic enzymes, and by longer-term effects via phosphorylation of transcription regulators. Regulates lipid synthesis by phosphorylating and inactivating lipid metabolic enzymes such as ACACA, ACACB, GYS1, HMGCR and LIPE; regulates fatty acid and cholesterol synthesis by phosphorylating acetyl-CoA carboxylase (ACACA and ACACB) and hormone-sensitive lipase (LIPE) enzymes, respectively. Promotes lipolysis of lipid droplets by mediating phosphorylation of isoform 1 of CHKA (CHKalpha2). Regulates insulin-signaling and glycolysis by phosphorylating IRS1, PFKFB2 and PFKFB3. Involved in insulin receptor/INSR internalization. AMPK stimulates glucose uptake in muscle by increasing the translocation of the glucose transporter SLC2A4/GLUT4 to the plasma membrane, possibly by mediating phosphorylation of TBC1D4/AS160. Regulates transcription and chromatin structure by phosphorylating transcription regulators involved in energy metabolism such as CRTC2/TORC2, FOXO3, histone H2B, HDAC5, MEF2C, MLXIPL/ChREBP, EP300, HNF4A, p53/TP53, SREBF1, SREBF2 and PPARGC1A. Acts as a key regulator of glucose homeostasis in liver by phosphorylating CRTC2/TORC2, leading to CRTC2/TORC2 sequestration in the cytoplasm. In response to stress, phosphorylates 'Ser-36' of histone H2B (H2BS36ph), leading to promote transcription. Acts as a key regulator of cell growth and proliferation by phosphorylating FNIP1, TSC2, RPTOR, WDR24 and ATG1/ULK1: in response to nutrient limitation, negatively regulates the mTORC1 complex by phosphorylating RPTOR component of the mTORC1 complex and by phosphorylating and activating TSC2. Also phosphorylates and inhibits GATOR2 subunit WDR24 in response to nutrient limitation, leading to suppress glucose-mediated mTORC1 activation. In response to energetic stress, phosphorylates FNIP1, inactivating the non-canonical mTORC1 signaling, thereby promoting nuclear translocation of TFEB and TFE3, and inducing transcription of lysosomal or autophagy genes. In response to nutrient limitation, promotes autophagy by phosphorylating and activating ATG1/ULK1. In that process, it also activates WDR45/WIPI4. Phosphorylates CASP6, thereby preventing its autoprocessing and subsequent activation. AMPK also acts as a regulator of circadian rhythm by mediating phosphorylation of CRY1, leading to destabilize it. May regulate the Wnt signaling pathway by phosphorylating CTNNB1, leading to stabilize it. Also acts as a regulator of cellular polarity by remodeling the actin cytoskeleton; probably by indirectly activating myosin. Also phosphorylates CFTR, EEF2K, KLC1, NOS3 and SLC12A1. Plays an important role in the differential regulation of pro-autophagy (composed of PIK3C3, BECN1, PIK3R4 and UVRAG or ATG14) and non-autophagy (composed of PIK3C3, BECN1 and PIK3R4) complexes, in response to glucose starvation. Can inhibit the non-autophagy complex by phosphorylating PIK3C3 and can activate the pro-autophagy complex by phosphorylating BECN1. Upon glucose starvation, promotes ARF6 activation in a kinase-independent manner leading to cell migration. Upon glucose deprivation mediates the phosphorylation of ACSS2 at 'Ser-659', which exposes the nuclear localization signal of ACSS2, required for its interaction with KPNA1 and nuclear translocation. Upon stress, regulates mitochondrial fragmentation through phosphorylation of MTFR1L. This chain is 5'-AMP-activated protein kinase catalytic subunit alpha-2, found in Homo sapiens (Human).